Reading from the N-terminus, the 820-residue chain is MGIHLGEIGIVLFPWFLWLSLFLSCGYAAITISSPLTLGQTLSSPGGFYELGFFSPNNSQNQYVGIWFKKITPRVVVWVANREKPITTPVANLTISRNGSLILLDSSKNVVWSTRRPSISNKCHAKLLDTGNLVIVDDVSENLLWQSFENPGDTMLPYSSLMYNLATGEKRVLSSWKSHTDPSPGDFVVRLTPQVPAQIVTMRGSSVYKRSGPWAKTGFTGVPLMDESYTSPFSLSQDVGNGTGLFSYLQRSSELTRVIITSEGYLKTFRYNGTGWVLDFITPANLCDLYGACGPFGLCVTSNPTKCKCMKGFVPKYKEEWKRGNMTSGCMRRTELSCQANLSTKTQGKGVDVFYRLANVKPPDLYEYASFVDADQCHQGCLSNCSCSAFAYITGIGCLLWNHELIDTIRYSVGGEFLSIRLASSELAGSRRTKIIVGSISLSIFVILAFGSYKYWRYRAKQNVGPTWAFFNNSQDSWKNGLEPQEISGLTFFEMNTIRAATNNFNVSNKLGQGGFGPVYKGTLSDKKDIAVKRLSSSSGQGTEEFMNEIKLISKLQHRNLVRLLGCCIDGEEKLLIYEFLVNKSLDTFLFDLTLKLQIDWPKRFNIIQGVSRGLLYLHRDSCMRVIHRDLKVSNILLDDKMNPKISDFGLARMFQGTQHQDNTRKVVGTLGYMSPEYAWTGMFSEKSDIYAFGVLLLEIISGKKISSFCCGEEGKTLLGHAWECWLETGGVDLLDEDISSSCSPVEVEVARCVQIGLLCIQQQAVDRPNIAQVVTMMTSATDLPRPKQPLFALQIQDQESVVSVSKSVNHVTQTEIYGR.

The N-terminal stretch at 1-28 is a signal peptide; it reads MGIHLGEIGIVLFPWFLWLSLFLSCGYA. The Bulb-type lectin domain maps to 29 to 148; sequence AITISSPLTL…VSENLLWQSF (120 aa). The Extracellular segment spans residues 29-434; that stretch reads AITISSPLTL…SELAGSRRTK (406 aa). N-linked (GlcNAc...) asparagine glycosylation is found at Asn-57, Asn-92, Asn-98, Asn-241, and Asn-272. The 37-residue stretch at 283–319 folds into the EGF-like domain; that stretch reads PANLCDLYGACGPFGLCVTSNPTKCKCMKGFVPKYKE. Cystine bridges form between Cys-287–Cys-299 and Cys-293–Cys-307. Residues Asn-325, Asn-341, and Asn-384 are each glycosylated (N-linked (GlcNAc...) asparagine). A PAN domain is found at 338–422; it reads CQANLSTKTQ…VGGEFLSIRL (85 aa). Cystine bridges form between Cys-377–Cys-398 and Cys-381–Cys-387. A helical membrane pass occupies residues 435 to 455; sequence IIVGSISLSIFVILAFGSYKY. The Cytoplasmic segment spans residues 456–820; sequence WRYRAKQNVG…HVTQTEIYGR (365 aa). The 288-residue stretch at 505–792 folds into the Protein kinase domain; it reads FNVSNKLGQG…DLPRPKQPLF (288 aa). ATP-binding positions include 511-519 and Lys-533; that span reads LGQGGFGPV. Phosphoserine occurs at positions 539 and 554. Residues 594-611 form a caM-binding region; the sequence is TLKLQIDWPKRFNIIQGV. Asp-630 (proton acceptor) is an active-site residue. Ser-634 and Ser-647 each carry phosphoserine. Thr-664 bears the Phosphothreonine mark. A phosphoserine mark is found at Ser-707, Ser-708, and Ser-808. Thr-815 is modified (phosphothreonine).

It belongs to the protein kinase superfamily. Ser/Thr protein kinase family.

It is found in the cell membrane. It carries out the reaction L-seryl-[protein] + ATP = O-phospho-L-seryl-[protein] + ADP + H(+). It catalyses the reaction L-threonyl-[protein] + ATP = O-phospho-L-threonyl-[protein] + ADP + H(+). The polypeptide is G-type lectin S-receptor-like serine/threonine-protein kinase At1g11280 (Arabidopsis thaliana (Mouse-ear cress)).